The sequence spans 454 residues: Aspartokinase 3 (454 aa).

2 consecutive ACT domains span residues 312–388 (ISKY…ALIM) and 389–454 (VVGE…VLIS).

This sequence belongs to the aspartokinase family. Monomer.

It catalyses the reaction L-aspartate + ATP = 4-phospho-L-aspartate + ADP. It participates in amino-acid biosynthesis; L-lysine biosynthesis via DAP pathway; (S)-tetrahydrodipicolinate from L-aspartate: step 1/4. Its pathway is amino-acid biosynthesis; L-methionine biosynthesis via de novo pathway; L-homoserine from L-aspartate: step 1/3. The protein operates within amino-acid biosynthesis; L-threonine biosynthesis; L-threonine from L-aspartate: step 1/5. In terms of biological role, catalyzes the phosphorylation of the beta-carboxyl group of aspartic acid with ATP to yield 4-phospho-L-aspartate, which is involved in the branched biosynthetic pathway leading to the biosynthesis of amino acids threonine, isoleucine and methionine. This is Aspartokinase 3 (yclM) from Bacillus subtilis (strain 168).